The following is a 232-amino-acid chain: Aquaporin Z (232 aa).

The next 2 helical transmembrane spans lie at 8 to 28 (AFGT…AAGF) and 33 to 53 (IGLL…AFAI). The short motif at 62-64 (NPA) is the NPA 1 element. The next 3 membrane-spanning stretches (helical) occupy residues 84–104 (IIAQ…IATG), 130–150 (MLAA…VIMG), and 159–179 (GFAP…SIPV). Positions 185-187 (NPA) match the NPA 2 motif. Residues 201-221 (VSQLWLFWVAPIVGGVLGAVI) traverse the membrane as a helical segment.

This sequence belongs to the MIP/aquaporin (TC 1.A.8) family. As to quaternary structure, homotetramer.

Its subcellular location is the cell inner membrane. The enzyme catalyses H2O(in) = H2O(out). Its function is as follows. Channel that permits osmotically driven movement of water in both directions. It is involved in the osmoregulation and in the maintenance of cell turgor during volume expansion in rapidly growing cells. It mediates rapid entry or exit of water in response to abrupt changes in osmolarity. The polypeptide is Aquaporin Z (Vibrio parahaemolyticus serotype O3:K6 (strain RIMD 2210633)).